A 392-amino-acid polypeptide reads, in one-letter code: MENRIEMSQLRASKKDSKISYVLLMATKLYLEGGQPVGSKLLKETYCSDLSSATIRNYFAQLETDGFLRKNHISGGRIPTDLAFRYYADHNAPFLEQEEILAIQQKLTELPEYSKNIVKDLQKASEVLSDILQLPVCFSSPRFESDSVINIQLVAIDDQRVVFVLSTEFGQVFTDVLWLPEQLPENSLKRIEGFLQNYLRKQPSDSLLSQKEKDLGMVLYNEVVVRYLTRYCHFSEEDLYQTGLSRLLKYETFKDPETLAQGLAFFENRKHMCQLLNTYLHKETPTAFIGRELTDIVGNTDPSCAVITIPYYMDRTPLGAFGVLGPMNLPYQQVFGTLSLFTERLKVILTQSFYKFKLSFRRPCPTDPRCSQRPAELTRSSSIKLLPAKELS.

The protein belongs to the HrcA family.

In terms of biological role, negative regulator of class I heat shock genes (grpE-dnaK-dnaJ and groELS operons). Prevents heat-shock induction of these operons. This Chlamydia trachomatis serovar D (strain ATCC VR-885 / DSM 19411 / UW-3/Cx) protein is Heat-inducible transcription repressor HrcA.